Consider the following 307-residue polypeptide: Ribonuclease HIII (307 aa).

The RNase H type-2 domain maps to 93 to 307; that stretch reads MSVIGSDEVG…ANTQKAKKWL (215 aa). A divalent metal cation-binding residues include D99, E100, and D204.

The protein belongs to the RNase HII family. RnhC subfamily. Mn(2+) serves as cofactor. Requires Mg(2+) as cofactor.

It localises to the cytoplasm. The enzyme catalyses Endonucleolytic cleavage to 5'-phosphomonoester.. Endonuclease that specifically degrades the RNA of RNA-DNA hybrids. In Bacillus pumilus (strain SAFR-032), this protein is Ribonuclease HIII.